A 161-amino-acid chain; its full sequence is MSIITKMILNADAEVRYLTPGELDQINIFVKSSQRRLQLVEALTQSRATIVKQAGKDIFQRFPRLVAPGGNAYGENMTATCLRDMDYYLRLITYSVAAGDTTPIQEIGIVGVRQMYRSLGTPIDAVAESVRAMKNITTSMLSGEDASEVGTYFDYLITNLQ.

N4-methylasparagine is present on Asn-71. A (2R,3E)-phycocyanobilin-binding site is contributed by Cys-81.

This sequence belongs to the phycobiliprotein family. In terms of assembly, component of the phycobilisome. Heterodimer of an alpha and a beta chain. Contains one covalently linked bilin chromophore.

Its subcellular location is the cellular thylakoid membrane. Functionally, light-harvesting photosynthetic bile pigment-protein from the phycobiliprotein complex. Allophycocyanin has a maximum absorption at approximately 650 nanometers. This chain is Allophycocyanin alpha chain 2 (apcA2), found in Microchaete diplosiphon (Fremyella diplosiphon).